The primary structure comprises 63 residues: Large ribosomal subunit protein uL29 (63 aa).

It belongs to the universal ribosomal protein uL29 family.

The chain is Large ribosomal subunit protein uL29 from Bordetella avium (strain 197N).